The sequence spans 608 residues: Microtubule-associated protein 70-3 (608 aa).

The tract at residues 1 to 23 (MADGVEEGNAVAPRGPARRRGTV) is disordered. Residues 40–346 (DPVRVELTRL…ARSEAQLKEK (307 aa)) are a coiled coil. Residues 224–458 (ILDKLQRQKV…HLLNRSTDAV (235 aa)) form a required for targeting to microtubules region. Disordered regions lie at residues 354–493 (LEDG…TANN) and 570–608 (DKEQ…RNYQ). Positions 363 to 379 (SGSSRLPTEGKSFSNGP) are enriched in polar residues. Residues 402–421 (RRSPSFHSRSSLSSSSSLVL) show a composition bias toward low complexity. The segment covering 476 to 493 (IENTNSNTDESNKETANN) has biased composition (polar residues). Residues 542-576 (LTKAMEVEAKKMRREVAAMEKEVAAMRVDKEQEVK) are a coiled coil. Over residues 586 to 608 (TGSSQVLSGSRSSSRSGLTRNYQ) the composition is skewed to low complexity.

Belongs to the MAP70 family.

It is found in the cytoplasm. The protein localises to the cytoskeleton. Plant-specific protein that interact with microtubules. This chain is Microtubule-associated protein 70-3 (MAP70.3), found in Oryza sativa subsp. japonica (Rice).